Reading from the N-terminus, the 275-residue chain is Uroplakin-3b (275 aa).

The first 26 residues, M1–S26, serve as a signal peptide directing secretion. Topologically, residues L27–C196 are lumenal. N-linked (GlcNAc...) asparagine glycosylation occurs at N77. The chain crosses the membrane as a helical span at residues M197–A217. Topologically, residues A218–P275 are cytoplasmic.

This sequence belongs to the uroplakin-3 family. As to quaternary structure, heterodimer with uroplakin-1B (UPK1B). Expression is urothelium-specific.

Its subcellular location is the cell membrane. Its function is as follows. Component of the asymmetric unit membrane (AUM); a highly specialized biomembrane elaborated by terminally differentiated urothelial cells. May play an important role in AUM-cytoskeleton interaction in terminally differentiated urothelial cells. It also contributes to the formation of urothelial glycocalyx which may play an important role in preventing bacterial adherence. This Mus musculus (Mouse) protein is Uroplakin-3b (Upk3b).